We begin with the raw amino-acid sequence, 283 residues long: NFU1 iron-sulfur cluster scaffold homolog, mitochondrial (283 aa).

The N-terminal 65 residues, 1-65 (MSKFLSQAAI…ELRMPVACRR (65 aa)), are a transit peptide targeting the mitochondrion. Residues 182–250 (IKELLDTRIR…IPEVESVEQV (69 aa)) form a nifU region. The [4Fe-4S] cluster site is built by Cys-219 and Cys-222.

This sequence belongs to the NifU family.

The protein localises to the mitochondrion. In terms of biological role, molecular scaffold for [Fe-S] cluster assembly of mitochondrial iron-sulfur proteins. This chain is NFU1 iron-sulfur cluster scaffold homolog, mitochondrial, found in Drosophila simulans (Fruit fly).